A 152-amino-acid polypeptide reads, in one-letter code: Glutaredoxin-related protein 5, mitochondrial (152 aa).

The N-terminal 31 residues, 1–31, are a transit peptide targeting the mitochondrion; it reads MSASLSRAAAALLRWGRSAGGGGLPGAGVRA. The region spanning 38 to 141 is the Glutaredoxin domain; it reads AEQLDALVKK…EELKKLGIRS (104 aa). Glutathione is bound at residue Lys-55. Lys-55 carries the post-translational modification N6-succinyllysine. Cys-63 is a binding site for [2Fe-2S] cluster. Residues 93-97, Ile-105, and 118-119 contribute to the glutathione site; these read RQGIK and CD. Position 151 is a phosphoserine (Ser-151).

This sequence belongs to the glutaredoxin family. Monothiol subfamily. As to quaternary structure, homodimer. Interacts with ISCU. Interacts with BOLA1. Detected in bone, liver, muscle and kidney.

The protein resides in the mitochondrion matrix. Monothiol glutaredoxin involved in mitochondrial iron-sulfur (Fe/S) cluster transfer. Receives 2Fe/2S clusters from scaffold protein ISCU and mediates their transfer to apoproteins, to the 4Fe/FS cluster biosynthesis machinery, or export from mitochondrion. Required for normal regulation of hemoglobin synthesis by the iron-sulfur protein ACO1. The protein is Glutaredoxin-related protein 5, mitochondrial (Glrx5) of Mus musculus (Mouse).